A 235-amino-acid polypeptide reads, in one-letter code: Hydroxyacylglutathione hydrolase (235 aa).

Residues His53, His55, Asp57, His58, His109, Asp127, and His165 each contribute to the Zn(2+) site.

The protein belongs to the metallo-beta-lactamase superfamily. Glyoxalase II family. As to quaternary structure, monomer. Zn(2+) is required as a cofactor.

It carries out the reaction an S-(2-hydroxyacyl)glutathione + H2O = a 2-hydroxy carboxylate + glutathione + H(+). It functions in the pathway secondary metabolite metabolism; methylglyoxal degradation; (R)-lactate from methylglyoxal: step 2/2. In terms of biological role, thiolesterase that catalyzes the hydrolysis of S-D-lactoyl-glutathione to form glutathione and D-lactic acid. In Actinobacillus pleuropneumoniae serotype 5b (strain L20), this protein is Hydroxyacylglutathione hydrolase.